We begin with the raw amino-acid sequence, 697 residues long: SITS-binding protein (697 aa).

A disordered region spans residues 1–20 (MARRAKKMASNSGDSSPEPG). Topologically, residues 2–29 (ARRAKKMASNSGDSSPEPGIKEINETWK) are cytoplasmic. The chain crosses the membrane as a helical span at residues 30-50 (GAIACLGVALLFLMTIGVLYW). Residues Asn-112, Asn-134, Asn-162, Asn-386, Asn-405, and Asn-470 are each glycosylated (N-linked (GlcNAc...) asparagine). The next 2 helical transmembrane spans lie at 503–521 (GLIPSILHYSLLGYSFFIP) and 542–562 (WMQIATFLPVMSFSTPPWVFG). N-linked (GlcNAc...) asparagine glycosylation is present at Asn-568.

Belongs to the glycosyl hydrolase 31 family. Homodimer; disulfide-linked. As to expression, electroplax tissue, brain (200-fold less), and heart (500-fold less).

It is found in the membrane. In terms of biological role, this glycoprotein is probably not a functional part of the chloride channel. This chain is SITS-binding protein, found in Tetronarce californica (Pacific electric ray).